Reading from the N-terminus, the 173-residue chain is Photosystem I assembly protein Ycf3 (173 aa).

TPR repeat units lie at residues 35-68 (AYLY…EDNQ), 72-105 (GETL…NPKQ), and 120-153 (GRMA…YPGG).

Belongs to the Ycf3 family.

Its subcellular location is the cellular thylakoid membrane. In terms of biological role, essential for the assembly of the photosystem I (PSI) complex. May act as a chaperone-like factor to guide the assembly of the PSI subunits. The protein is Photosystem I assembly protein Ycf3 of Prochlorococcus marinus (strain NATL1A).